A 209-amino-acid chain; its full sequence is Molybdenum cofactor guanylyltransferase (209 aa).

GTP is bound by residues 13-15 (LAG), Lys-26, Asn-54, Asp-74, and Asp-104. Asp-104 contacts Mg(2+).

It belongs to the MobA family. In terms of assembly, monomer. It depends on Mg(2+) as a cofactor.

The protein resides in the cytoplasm. It carries out the reaction Mo-molybdopterin + GTP + H(+) = Mo-molybdopterin guanine dinucleotide + diphosphate. In terms of biological role, transfers a GMP moiety from GTP to Mo-molybdopterin (Mo-MPT) cofactor (Moco or molybdenum cofactor) to form Mo-molybdopterin guanine dinucleotide (Mo-MGD) cofactor. This Acinetobacter baumannii (strain ACICU) protein is Molybdenum cofactor guanylyltransferase.